A 342-amino-acid polypeptide reads, in one-letter code: Inositol 2-dehydrogenase 2 (342 aa).

The protein belongs to the Gfo/Idh/MocA family. Homotetramer.

The enzyme catalyses myo-inositol + NAD(+) = scyllo-inosose + NADH + H(+). In terms of biological role, involved in the oxidation of myo-inositol (MI) to 2-keto-myo-inositol (2KMI or 2-inosose). The protein is Inositol 2-dehydrogenase 2 of Mycolicibacterium vanbaalenii (strain DSM 7251 / JCM 13017 / BCRC 16820 / KCTC 9966 / NRRL B-24157 / PYR-1) (Mycobacterium vanbaalenii).